The primary structure comprises 136 residues: Protein NrdI (136 aa).

It belongs to the NrdI family.

In terms of biological role, probably involved in ribonucleotide reductase function. This is Protein NrdI from Escherichia coli O1:K1 / APEC.